The primary structure comprises 689 residues: UvrABC system protein C (689 aa).

The 80-residue stretch at 16–95 (TNPGVYRFRD…IKEFAPRFNI (80 aa)) folds into the GIY-YIG domain. One can recognise a UVR domain in the interval 208 to 243 (KPYIRELTRQMNEAAECMDFETAAARRDDVGALERV). The segment at 316 to 337 (LAPAASGRRRTARHGSEDVVGQ) is disordered.

This sequence belongs to the UvrC family. In terms of assembly, interacts with UvrB in an incision complex.

The protein resides in the cytoplasm. The UvrABC repair system catalyzes the recognition and processing of DNA lesions. UvrC both incises the 5' and 3' sides of the lesion. The N-terminal half is responsible for the 3' incision and the C-terminal half is responsible for the 5' incision. In Kocuria rhizophila (strain ATCC 9341 / DSM 348 / NBRC 103217 / DC2201), this protein is UvrABC system protein C.